Consider the following 398-residue polypeptide: Exodeoxyribonuclease 7 large subunit (398 aa).

It belongs to the XseA family. As to quaternary structure, heterooligomer composed of large and small subunits.

Its subcellular location is the cytoplasm. The enzyme catalyses Exonucleolytic cleavage in either 5'- to 3'- or 3'- to 5'-direction to yield nucleoside 5'-phosphates.. Functionally, bidirectionally degrades single-stranded DNA into large acid-insoluble oligonucleotides, which are then degraded further into small acid-soluble oligonucleotides. The polypeptide is Exodeoxyribonuclease 7 large subunit (Chlorobaculum tepidum (strain ATCC 49652 / DSM 12025 / NBRC 103806 / TLS) (Chlorobium tepidum)).